Consider the following 284-residue polypeptide: 2-dehydro-3-deoxyphosphooctonate aldolase (284 aa).

The protein belongs to the KdsA family.

It is found in the cytoplasm. It catalyses the reaction D-arabinose 5-phosphate + phosphoenolpyruvate + H2O = 3-deoxy-alpha-D-manno-2-octulosonate-8-phosphate + phosphate. The protein operates within carbohydrate biosynthesis; 3-deoxy-D-manno-octulosonate biosynthesis; 3-deoxy-D-manno-octulosonate from D-ribulose 5-phosphate: step 2/3. It functions in the pathway bacterial outer membrane biogenesis; lipopolysaccharide biosynthesis. The polypeptide is 2-dehydro-3-deoxyphosphooctonate aldolase (Paraburkholderia phymatum (strain DSM 17167 / CIP 108236 / LMG 21445 / STM815) (Burkholderia phymatum)).